Here is a 151-residue protein sequence, read N- to C-terminus: Deoxyuridine 5'-triphosphate nucleotidohydrolase (151 aa).

Residues 70-72, Asn-83, 87-89, and Met-97 each bind substrate; these read RSG and LID.

This sequence belongs to the dUTPase family. In terms of assembly, homotrimer. Mg(2+) serves as cofactor.

It catalyses the reaction dUTP + H2O = dUMP + diphosphate + H(+). It functions in the pathway pyrimidine metabolism; dUMP biosynthesis; dUMP from dCTP (dUTP route): step 2/2. Its function is as follows. This enzyme is involved in nucleotide metabolism: it produces dUMP, the immediate precursor of thymidine nucleotides and it decreases the intracellular concentration of dUTP so that uracil cannot be incorporated into DNA. This chain is Deoxyuridine 5'-triphosphate nucleotidohydrolase, found in Escherichia coli O7:K1 (strain IAI39 / ExPEC).